An 84-amino-acid polypeptide reads, in one-letter code: Beta-mammal Tt1g (84 aa).

Residues 1-20 (MKGMILFISCILLIGIVVEC) form the signal peptide. Residues 21 to 82 (KEGYLMDHEG…VWERATNRCG (62 aa)) form the LCN-type CS-alpha/beta domain. 4 disulfide bridges follow: Cys-31/Cys-81, Cys-35/Cys-57, Cys-43/Cys-62, and Cys-47/Cys-64. Cys-81 bears the Cysteine amide mark.

This sequence belongs to the long (4 C-C) scorpion toxin superfamily. Sodium channel inhibitor family. Beta subfamily. In terms of tissue distribution, expressed by the venom gland.

The protein resides in the secreted. Beta toxins modify sodium channel function in two ways: an excitatory effect (shifting the activation process to more negative potential) and/or a depressant effect (reducing the peak current). At concentration of 500 nM this toxin produces channel opening at more negative potentials in hNav1.2/SCN2A and hNav1.3/SCN3A, which shows the biggest effect. On the other hand the peak current is decreased in hNav1.4/SCN4A and hNav1.5/SCN5A channels, without apparent modification of the activation gate. This toxin is active against mammals. This Tityus trivittatus (Argentinean scorpion) protein is Beta-mammal Tt1g.